Reading from the N-terminus, the 637-residue chain is Threonine--tRNA ligase (637 aa).

Residues 1–61 (MIKISLKNGK…NKDCKVEILT (61 aa)) enclose the TGS domain. Residues 242–532 (DHRKLGKELD…LIEHYAGAFP (291 aa)) form a catalytic region. Positions 333, 384, and 509 each coordinate Zn(2+).

It belongs to the class-II aminoacyl-tRNA synthetase family. Homodimer. It depends on Zn(2+) as a cofactor.

The protein resides in the cytoplasm. The enzyme catalyses tRNA(Thr) + L-threonine + ATP = L-threonyl-tRNA(Thr) + AMP + diphosphate + H(+). Its function is as follows. Catalyzes the attachment of threonine to tRNA(Thr) in a two-step reaction: L-threonine is first activated by ATP to form Thr-AMP and then transferred to the acceptor end of tRNA(Thr). Also edits incorrectly charged L-seryl-tRNA(Thr). The chain is Threonine--tRNA ligase from Clostridium kluyveri (strain NBRC 12016).